A 2871-amino-acid polypeptide reads, in one-letter code: Fibrillin-1 (2871 aa).

The signal sequence occupies residues 1–24 (MRRGGLLEVALGFTVLLASYTSHG). The propeptide occupies 25-44 (ADTNLEAGNVKETRANRAKR). A fibrillin unique N-terminal (FUN) domain region spans residues 45–81 (RGGGGHDALKGPNVCGSRYNAYCCPGWKTLPGGNQCI). Residues 45–450 (RGGGGHDALK…PPRVLPVNVT (406 aa)) are N-terminal domain. 11 disulfides stabilise this stretch: cysteine 59/cysteine 68, cysteine 67/cysteine 80, cysteine 85/cysteine 94, cysteine 89/cysteine 100, cysteine 102/cysteine 111, cysteine 119/cysteine 129, cysteine 123/cysteine 134, cysteine 136/cysteine 145, cysteine 150/cysteine 160, cysteine 154/cysteine 166, and cysteine 168/cysteine 177. 3 EGF-like domains span residues 81-112 (IVPI…PSCG), 115-146 (SIQH…THCG), and 147-178 (QPVC…PQCE). Residues 119–329 (CNIRCMNGGS…YTSPDGTRCI (211 aa)) form an interaction with MFAP4 region. Residues 184–236 (GPCFTVISNQMCQGQLSGIVCTKTLCCATVGRAWGHPCEMCPAQPHPCRRGFI) enclose the TB 1 domain. A hybrid domain 1 region spans residues 195–221 (CQGQLSGIVCTKTLCCATVGRAWGHPC). Residues 246–287 (DVDECQAIPGLCQGGNCINTVGSFECKCPAGHKFNEVSQKCE) enclose the EGF-like 4; calcium-binding domain. Disulfide bonds link cysteine 250-cysteine 262, cysteine 257-cysteine 271, cysteine 273-cysteine 286, cysteine 292-cysteine 304, cysteine 299-cysteine 313, and cysteine 315-cysteine 328. The O-linked (Glc) serine glycan is linked to serine 268. The EGF-like 5; calcium-binding domain maps to 288–329 (DIDECSTIPGICDGGECTNTVSSYFCKCPPGFYTSPDGTRCI). A TB 2 domain is found at 334-389 (GYCYTALANGRCSNQLPQSITKMQCCCDVGRCWSPGVTVAPEMCPIRATEDFNKLC). A glycan (N-linked (GlcNAc...) asparagine) is linked at asparagine 448. The EGF-like 6 domain occupies 449 to 489 (VTDYCQLFRYLCQNGRCIPTPGSYRCECNKGFQLDLRGECI). 15 cysteine pairs are disulfide-bonded: cysteine 453-cysteine 465, cysteine 460-cysteine 474, cysteine 476-cysteine 488, cysteine 494-cysteine 504, cysteine 499-cysteine 513, cysteine 515-cysteine 528, cysteine 534-cysteine 546, cysteine 541-cysteine 555, cysteine 557-cysteine 570, cysteine 576-cysteine 587, cysteine 582-cysteine 596, cysteine 598-cysteine 611, cysteine 617-cysteine 628, cysteine 623-cysteine 637, and cysteine 639-cysteine 652. O-linked (Glc) serine glycosylation is present at serine 471. One can recognise an EGF-like 7; calcium-binding domain in the interval 490 to 529 (DVDECEKNPCAGGECINTQGSYTCQCRPGYQSTLTRTECR). O-linked (Glc) serine glycosylation is present at serine 510. The 42-residue stretch at 530–571 (DIDECLQNGRICNNGRCINTDGSFHCVCNAGFHVTRDGKNCE) folds into the EGF-like 8; calcium-binding domain. The region spanning 572-612 (DMDECSIRNMCLNGMCINEDGSFKCICKPGFQLASDGRYCK) is the EGF-like 9; calcium-binding domain. The EGF-like 10; calcium-binding domain maps to 613–653 (DINECETPGICMNGRCVNTDGSYRCECFPGLAVGLDGRVCV). Positions 659–711 (STCYGGYKRGQCVKPLFGAVTKSECCCASTEYAFGEPCQPCPSQNSAEYQALC) constitute a TB 3 domain. One can recognise an EGF-like 11; calcium-binding domain in the interval 723 to 764 (DINECALDPDICPNGICENLRGTYKCICNSGYEVDSTGKNCV). 16 cysteine pairs are disulfide-bonded: cysteine 727/cysteine 739, cysteine 734/cysteine 748, cysteine 750/cysteine 763, cysteine 769/cysteine 781, cysteine 776/cysteine 790, cysteine 792/cysteine 805, cysteine 811/cysteine 821, cysteine 816/cysteine 830, cysteine 832/cysteine 845, cysteine 853/cysteine 875, cysteine 862/cysteine 887, cysteine 876/cysteine 890, cysteine 896/cysteine 908, cysteine 914/cysteine 926, cysteine 921/cysteine 935, and cysteine 937/cysteine 950. One can recognise an EGF-like 12; calcium-binding domain in the interval 765 to 806 (DINECVLNSLLCDNGQCRNTPGSFVCTCPKGFIYKPELKTCE). The region spanning 807–846 (DIDECESSPCINGVCKNSPGSFICECSSESTLDPTKTICI) is the EGF-like 13; calcium-binding domain. The region spanning 851–902 (GTCWQTVIDGRCEININGATLKSQCCSSLGAAWGSPCTPCQVDPICGKGYSR) is the TB 4 domain. Positions 862-887 (CEININGATLKSQCCSSLGAAWGSPC) are hybrid domain 2. In terms of domain architecture, EGF-like 14; calcium-binding spans 910 to 951 (DIDECEVFPGVCKNGLCVNSKGSFKCQCPSGMTLDATGRICL). One can recognise a TB 5 domain in the interval 956–1008 (ETCFLRYEDEECTLPVAGRHRMDACCCSVGAAWGTEECEECPVRNTPEYEELC). One can recognise an EGF-like 15; calcium-binding domain in the interval 1028–1069 (DINECKMIPNLCTHGKCRNTIGSFKCRCDSGFALDSEERNCT). Disulfide bonds link cysteine 1032/cysteine 1044, cysteine 1039/cysteine 1053, cysteine 1055/cysteine 1068, cysteine 1074/cysteine 1086, cysteine 1081/cysteine 1095, cysteine 1097/cysteine 1111, cysteine 1117/cysteine 1129, cysteine 1124/cysteine 1138, cysteine 1140/cysteine 1153, cysteine 1159/cysteine 1171, cysteine 1166/cysteine 1180, cysteine 1182/cysteine 1195, cysteine 1201/cysteine 1212, cysteine 1208/cysteine 1221, cysteine 1223/cysteine 1236, cysteine 1242/cysteine 1254, cysteine 1249/cysteine 1263, cysteine 1265/cysteine 1278, cysteine 1284/cysteine 1296, cysteine 1291/cysteine 1305, cysteine 1307/cysteine 1320, cysteine 1326/cysteine 1339, cysteine 1333/cysteine 1348, cysteine 1350/cysteine 1361, cysteine 1367/cysteine 1380, cysteine 1374/cysteine 1389, cysteine 1391/cysteine 1402, cysteine 1408/cysteine 1420, cysteine 1415/cysteine 1429, cysteine 1431/cysteine 1444, cysteine 1450/cysteine 1461, cysteine 1456/cysteine 1470, cysteine 1472/cysteine 1485, cysteine 1491/cysteine 1502, cysteine 1497/cysteine 1511, cysteine 1513/cysteine 1526, cysteine 1534/cysteine 1562, cysteine 1549/cysteine 1574, cysteine 1563/cysteine 1577, cysteine 1564/cysteine 1589, cysteine 1610/cysteine 1622, cysteine 1617/cysteine 1631, cysteine 1633/cysteine 1646, cysteine 1652/cysteine 1663, cysteine 1658/cysteine 1672, and cysteine 1674/cysteine 1687. N-linked (GlcNAc...) asparagine glycosylation occurs at asparagine 1067. The region spanning 1070–1112 (DIDECRISPDLCGRGQCVNTPGDFECKCDEGYESGFMMMKNCM) is the EGF-like 16; calcium-binding domain. The EGF-like 17; calcium-binding domain maps to 1113-1154 (DIDECQRDPLLCRGGVCLNTEGSYRCECPPGHQLAPNISACI). A glycan (O-linked (Glc) serine) is linked at serine 1135. Residue asparagine 1149 is glycosylated (N-linked (GlcNAc...) asparagine). The 42-residue stretch at 1155-1196 (DINECELSAHLCPHGRCVNLIGKYQCACNPGYHSTPDRLFCV) folds into the EGF-like 18; calcium-binding domain. Residues 1197 to 1237 (DIDECSIMNGGCETFCTNSEGSYECSCQPGFALMPDQRSCT) enclose the EGF-like 19; calcium-binding domain. O-linked (Glc) serine glycosylation occurs at serine 1218. Positions 1238 to 1279 (DIDECEDNPNICDGGQCTNIPGEYRCLCYDGFMASEDMKTCV) constitute an EGF-like 20; calcium-binding domain. Residues 1280–1321 (DVNECDLNPNICLSGTCENTKGSFICHCDMGYSGKKGKTGCT) form the EGF-like 21; calcium-binding domain. O-linked (Glc) serine glycosylation is present at serine 1302. An EGF-like 22; calcium-binding domain is found at 1322 to 1362 (DINECEIGAHNCDRHAVCTNTAGSFKCSCSPGWIGDGIKCT). O-linked (Glc) serine glycosylation is present at serine 1345. Residues 1363–1403 (DLDECSNGTHMCSQHADCKNTMGSYRCLCKEGYTGDGFTCT) enclose the EGF-like 23; calcium-binding domain. The N-linked (GlcNAc...) asparagine glycan is linked to asparagine 1369. Serine 1386 carries an O-linked (Glc) serine glycan. Residues 1404–1445 (DLDECSENLNLCGNGQCLNAPGGYRCECDMGFVPSADGKACE) form the EGF-like 24; calcium-binding domain. Positions 1446 to 1486 (DIDECSLPNICVFGTCHNLPGLFRCECEIGYELDRSGGNCT) constitute an EGF-like 25; calcium-binding domain. N-linked (GlcNAc...) asparagine glycosylation occurs at asparagine 1484. The EGF-like 26; calcium-binding domain maps to 1487-1527 (DVNECLDPTTCISGNCVNTPGSYTCDCPPDFELNPTRVGCV). An O-linked (Glc) serine glycan is attached at serine 1508. The segment at 1528 to 2731 (DTRSGNCYLD…GYPKRGRKRR (1204 aa)) is C-terminal domain. The TB 6 domain maps to 1532–1589 (GNCYLDIRPRGDNGDTACSNEIGVGVSKASCCCSLGKAWGTPCELCPPVNTSEYKILC). Residues 1541 to 1543 (RGD) carry the Cell attachment site motif. A glycan (N-linked (GlcNAc...) asparagine) is linked at asparagine 1581. The EGF-like 27; calcium-binding domain maps to 1606 to 1647 (DIDECQELPGLCQGGKCINTFGSFQCRCPTGYYLNEDTRVCD). O-linked (Glc) serine glycosylation is present at serine 1628. Positions 1648 to 1688 (DVNECETPGICGPGTCYNTVGNYTCICPPDYMQVNGGNNCM) constitute an EGF-like 28; calcium-binding domain. An N-linked (GlcNAc...) asparagine glycan is attached at asparagine 1669. Residues 1693–1748 (SLCYRNYYADNQTCDGELLFNMTKKMCCCSYNIGRAWNKPCEQCPIPSTDEFATLC) form the TB 7 domain. N-linked (GlcNAc...) asparagine glycosylation is found at asparagine 1703 and asparagine 1713. An EGF-like 29; calcium-binding domain is found at 1766–1807 (DIDECREIPGVCENGVCINMVGSFRCECPVGFFYNDKLLVCE). 40 disulfides stabilise this stretch: cysteine 1770-cysteine 1782, cysteine 1777-cysteine 1791, cysteine 1793-cysteine 1806, cysteine 1812-cysteine 1824, cysteine 1818-cysteine 1833, cysteine 1835-cysteine 1847, cysteine 1853-cysteine 1865, cysteine 1860-cysteine 1874, cysteine 1876-cysteine 1889, cysteine 1895-cysteine 1905, cysteine 1900-cysteine 1914, cysteine 1916-cysteine 1928, cysteine 1934-cysteine 1947, cysteine 1942-cysteine 1956, cysteine 1958-cysteine 1971, cysteine 1977-cysteine 1989, cysteine 1984-cysteine 1998, cysteine 2000-cysteine 2011, cysteine 2017-cysteine 2029, cysteine 2024-cysteine 2038, cysteine 2040-cysteine 2053, cysteine 2061-cysteine 2083, cysteine 2070-cysteine 2096, cysteine 2084-cysteine 2099, cysteine 2085-cysteine 2111, cysteine 2131-cysteine 2142, cysteine 2137-cysteine 2151, cysteine 2153-cysteine 2164, cysteine 2170-cysteine 2181, cysteine 2176-cysteine 2190, cysteine 2192-cysteine 2204, cysteine 2210-cysteine 2221, cysteine 2217-cysteine 2230, cysteine 2232-cysteine 2245, cysteine 2251-cysteine 2265, cysteine 2258-cysteine 2274, cysteine 2276-cysteine 2289, cysteine 2295-cysteine 2307, cysteine 2302-cysteine 2316, and cysteine 2318-cysteine 2331. The 41-residue stretch at 1808–1848 (DIDECQNGPVCQRNAECINTAGSYRCDCKPGYRFTSTGQCN) folds into the EGF-like 30; calcium-binding domain. Serine 1830 carries an O-linked (Glc) serine glycan. The EGF-like 31; calcium-binding domain maps to 1849 to 1890 (DRNECQEIPNICSHGQCIDTVGSFYCLCHTGFKTNADQTMCL). O-linked (Glc) serine glycosylation is present at serine 1871. The EGF-like 32; calcium-binding domain maps to 1891–1929 (DINECERDACGNGTCRNTIGSFNCRCNHGFILSHNNDCI). Asparagine 1902 carries an N-linked (GlcNAc...) asparagine glycan. A glycan (O-linked (Glc) serine) is linked at serine 1911. An EGF-like 33; calcium-binding domain is found at 1930-1972 (DVDECATGNGNLCRNGQCINTVGSFQCQCNEGYEVAPDGRTCV). An O-linked (Glc) serine glycan is attached at serine 1953. The 40-residue stretch at 1973-2012 (DINECLLDPRKCAPGTCQNLDGSYRCICPPGYSLQNDKCE) folds into the EGF-like 34; calcium-binding domain. Positions 2013 to 2054 (DIDECVEEPEICALGTCSNTEGSFKCLCPDGFSLSSTGRRCQ) constitute an EGF-like 35; calcium-binding domain. O-linked (Glc) serine glycosylation occurs at serine 2035. The TB 8 domain maps to 2059–2111 (SYCYAKFEGGKCSSPKSRNHSKQECCCALKGEGWGDPCELCPTEPDEAFRQIC). N-linked (GlcNAc...) asparagine glycosylation occurs at asparagine 2077. The EGF-like 36; calcium-binding domain occupies 2127-2165 (DMDECKEPDVCKHGQCINTDGSYRCECPFGYILQGNECV). The O-linked (Glc) serine glycan is linked to serine 2148. One can recognise an EGF-like 37; calcium-binding domain in the interval 2166 to 2205 (DTDECSVGNPCGNGTCKNVIGGFECTCEEGFEPGPMMTCE). Residue asparagine 2178 is glycosylated (N-linked (GlcNAc...) asparagine). The 41-residue stretch at 2206-2246 (DINECAQNPLLCAFRCVNTYGSYECKCPAGYVLREDRRMCK) folds into the EGF-like 38; calcium-binding domain. Serine 2227 carries an O-linked (Glc) serine glycan. Positions 2247-2290 (DEDECEEGKHDCAEKQMECKNLIGTYLCICGPGYQRRPDGEGCV) constitute an EGF-like 39; calcium-binding domain. One can recognise an EGF-like 40; calcium-binding domain in the interval 2291-2332 (DENECQTKPGICENGRCLNTRGSYTCECNDGFTASPNQDECL). A glycan (O-linked (Glc) serine) is linked at serine 2313. The TB 9 domain maps to 2337-2390 (GYCFTEVLQNMCQIGSSNRNPVTKSECCCDGGRGWGPHCEICPFQGTVAFKKLC). The EGF-like 41; calcium-binding domain maps to 2402–2443 (DIDECKVIHDVCRNGECVNDRGSYHCICKTGYTPDITGTACV). Cystine bridges form between cysteine 2406–cysteine 2418, cysteine 2413–cysteine 2427, cysteine 2429–cysteine 2442, cysteine 2448–cysteine 2459, cysteine 2455–cysteine 2468, cysteine 2470–cysteine 2483, cysteine 2489–cysteine 2500, cysteine 2496–cysteine 2509, cysteine 2511–cysteine 2522, cysteine 2528–cysteine 2541, cysteine 2535–cysteine 2550, cysteine 2552–cysteine 2565, cysteine 2571–cysteine 2581, cysteine 2577–cysteine 2590, cysteine 2592–cysteine 2605, cysteine 2611–cysteine 2622, cysteine 2617–cysteine 2631, cysteine 2633–cysteine 2646, cysteine 2652–cysteine 2663, cysteine 2659–cysteine 2672, and cysteine 2674–cysteine 2686. In terms of domain architecture, EGF-like 42; calcium-binding spans 2444 to 2484 (DLNECNQAPKPCNFICKNTEGSYQCSCPKGYILQEDGRSCK). A glycan (O-linked (Glc) serine) is linked at serine 2465. In terms of domain architecture, EGF-like 43; calcium-binding spans 2485–2523 (DLDECATKQHNCQFLCVNTIGSFTCKCPPGFTQHHTACI). Residues 2524-2566 (DNNECTSDINLCGSKGICQNTPGSFTCECQRGFSLDPSGASCE) enclose the EGF-like 44; calcium-binding domain. Serine 2547 carries O-linked (Glc) serine glycosylation. In terms of domain architecture, EGF-like 45; calcium-binding spans 2567-2606 (DVDECEGNHRCQHGCQNIIGGYRCSCPQGYLQHYQWNQCV). Positions 2607–2647 (DENECLSAHICGGASCHNTLGSYKCMCPAGFQYEQFSGGCQ) constitute an EGF-like 46; calcium-binding domain. A glycan (O-linked (Glc) serine) is linked at serine 2628. An EGF-like 47; calcium-binding domain is found at 2648-2687 (DINECGSAQAPCSYGCSNTEGGYLCACPPGYFRIGQGHCV). 2 positions are modified to phosphoserine: serine 2702 and serine 2709. Asparagine 2734, asparagine 2750, and asparagine 2767 each carry an N-linked (GlcNAc...) asparagine glycan.

Belongs to the fibrillin family. As to quaternary structure, interacts with COL16A1. Interacts with integrin alpha-V/beta-3. Interacts with ADAMTS10; this interaction promotes microfibril assembly. Interacts with THSD4; this interaction promotes fibril formation. Interacts (via N-terminal domain) with FBLN2 and FBLN5. Interacts with ELN. Forms a ternary complex with ELN and FBLN2 or FBLN5 and a significant interaction with ELN seen only in the presence of FBLN2 or FBLN5. Interacts (via N-terminal domain) with LTBP2 (via C-terminal domain) in a Ca(+2)-dependent manner. Interacts (via N-terminal domain) with LTBP1 (via C-terminal domain). Interacts with integrins ITGA5:ITGB1, ITGAV:ITGB3 and ITGAV:ITGB6. Interacts (via N-terminal domain) with BMP2, BMP4, BMP7, BMP10 and GDF5. Interacts (via N-terminal domain) with MFAP2 and MFAP5. Interacts with ADAMTSL5. Interacts with MFAP4. Interacts (via N-terminal domain) with TNFSF11 in a Ca(+2)-dependent manner. Interacts (via N-terminal domain) with EFEMP2; this interaction inhibits EFEMP2 binding to LOX and ELN. In terms of processing, cleavage of N- and C-terminus by furin is required for incorporation into the extracellular matrix and assembly into microfibrils. The C-terminus, which corresponds to the Asprosin chain, was initially thought to constitute a propeptide. Fibrillin-1 and Asprosin chains are still linked together during the secretion from cells, but are subsequently separated by furin, an essential step for incorporation of Fibrillin-1 into the nascent microfibrils. Forms intermolecular disulfide bonds either with other fibrillin-1 molecules or with other components of the microfibrils. Post-translationally, O-glycosylated on serine residues by POGLUT2 and POGLUT3 which is necessary for efficient protein secretion.

It is found in the secreted. It localises to the extracellular space. Its subcellular location is the extracellular matrix. In terms of biological role, structural component of the 10-12 nm diameter microfibrils of the extracellular matrix, which conveys both structural and regulatory properties to load-bearing connective tissues. Fibrillin-1-containing microfibrils provide long-term force bearing structural support. In tissues such as the lung, blood vessels and skin, microfibrils form the periphery of the elastic fiber, acting as a scaffold for the deposition of elastin. In addition, microfibrils can occur as elastin-independent networks in tissues such as the ciliary zonule, tendon, cornea and glomerulus where they provide tensile strength and have anchoring roles. Fibrillin-1 also plays a key role in tissue homeostasis through specific interactions with growth factors, such as the bone morphogenetic proteins (BMPs), growth and differentiation factors (GDFs) and latent transforming growth factor-beta-binding proteins (LTBPs), cell-surface integrins and other extracellular matrix protein and proteoglycan components. Regulates osteoblast maturation by controlling TGF-beta bioavailability and calibrating TGF-beta and BMP levels, respectively. Negatively regulates osteoclastogenesis by binding and sequestering an osteoclast differentiation and activation factor TNFSF11. This leads to disruption of TNFSF11-induced Ca(2+) signaling and impairment of TNFSF11-mediated nuclear translocation and activation of transcription factor NFATC1 which regulates genes important for osteoclast differentiation and function. Mediates cell adhesion via its binding to cell surface receptors integrins ITGAV:ITGB3 and ITGA5:ITGB1. Binds heparin and this interaction plays an important role in the assembly of microfibrils. Functionally, hormone that targets the liver to increase plasma glucose levels. Secreted by white adipose tissue and circulates in the plasma. Acts in response to fasting and promotes blood glucose elevation by binding to the surface of hepatocytes. Promotes hepatocyte glucose release by activating the protein kinase A activity in the liver, resulting in rapid glucose release into the circulation. In Bos taurus (Bovine), this protein is Fibrillin-1.